The primary structure comprises 386 residues: Endonuclease III homolog 2, chloroplastic (386 aa).

The transit peptide at 1–50 (MILTGAASTFPIVARVLNAMNRRMYAATTLSSAKSISAESLNLRSDSNSE) directs the protein to the chloroplast. The disordered stretch occupies residues 44-66 (RSDSNSEAAHGASESETRVSLRK). Positions 252-278 (YDGDIPRTLEELLSLPGVGPKIAHLVL) constitute a HhH domain. Lys-272 serves as the catalytic Nucleophile; for N-glycosylase activity. Positions 347, 354, 357, and 363 each coordinate [4Fe-4S] cluster.

The protein belongs to the Nth/MutY family. [4Fe-4S] cluster is required as a cofactor.

The protein resides in the plastid. The protein localises to the chloroplast stroma. Its subcellular location is the chloroplast nucleoid. It carries out the reaction 2'-deoxyribonucleotide-(2'-deoxyribose 5'-phosphate)-2'-deoxyribonucleotide-DNA = a 3'-end 2'-deoxyribonucleotide-(2,3-dehydro-2,3-deoxyribose 5'-phosphate)-DNA + a 5'-end 5'-phospho-2'-deoxyribonucleoside-DNA + H(+). Functionally, bifunctional DNA N-glycosylase with associated apurinic/apyrimidinic (AP) lyase function that catalyzes the first step in base excision repair (BER), the primary repair pathway for the repair of oxidative DNA damage. The DNA N-glycosylase activity releases the damaged DNA base from DNA by cleaving the N-glycosidic bond, leaving an AP site. The AP lyase activity cleaves the phosphodiester bond 3' to the AP site by a beta-elimination. Primarily recognizes and repairs oxidative base damage of pyrimidines. This is Endonuclease III homolog 2, chloroplastic (NTH2) from Arabidopsis thaliana (Mouse-ear cress).